We begin with the raw amino-acid sequence, 169 residues long: Zinc metalloproteinase-disintegrin-like mikarin (169 aa).

A Peptidase M12B domain is found at 14–57 (KYLEYVVVDNNMYRNYGNAGPCVMSAEISFEPLQEFSSCDIQEP). Residues 65-129 (PAVCGNYYVE…PEICTGRSAK (65 aa)) form the Disintegrin domain. Disulfide bonds link C68-C97, C79-C92, C81-C87, C105-C111, C110-C123, and C150-C161. Residues 116 to 118 (DCD) carry the D/ECD-tripeptide motif.

It belongs to the venom metalloproteinase (M12B) family. P-III subfamily. P-IIIa sub-subfamily. In terms of assembly, monomer. Requires Zn(2+) as cofactor. As to expression, expressed by the venom gland.

Its subcellular location is the secreted. With respect to regulation, inhibited by EDTA, but not by PMSF. Snake venom zinc metalloproteinase that calcium-independently catalyzes the conversion of prothrombin (F2) to alpha-thrombin through the formation of a thrombin intermediate. The polypeptide is Zinc metalloproteinase-disintegrin-like mikarin (Micropechis ikaheca (New Guinean small-eyed snake)).